A 350-amino-acid polypeptide reads, in one-letter code: Pro-cathepsin H (350 aa).

Residues 1-19 (MAQWTLLIVFFCVATAAAG) form the signal peptide. The propeptide at 20-113 (LSFHDSNPIR…WEEFRSHRLG (94 aa)) is activation peptide. An N-linked (GlcNAc...) asparagine glycan is attached at N117. A propeptide spans 122–132 (LKGNHRITDVV) (removed in mature form). 2 cysteine pairs are disulfide-bonded: C154–C197 and C188–C230. C157 is a catalytic residue. An N-linked (GlcNAc...) asparagine glycan is attached at N177. N-linked (GlcNAc...) asparagine glycosylation occurs at N246. C288 and C338 form a disulfide bridge. Active-site residues include H297 and N317.

It belongs to the peptidase C1 family. Interacts with KPI104 and KPI106. Composed of a mini chain and a large chain. The large chain may be split into heavy and light chain. All chains are held together by disulfide bonds.

The protein resides in the vacuole. It is found in the lysosome. The enzyme catalyses Hydrolysis of proteins, acting as an aminopeptidase (notably, cleaving Arg-|-Xaa bonds) as well as an endopeptidase.. Functionally, may play a role in proteolysis leading to mobilization of nitrogen during senescence and starvation. This is Pro-cathepsin H from Medicago truncatula (Barrel medic).